We begin with the raw amino-acid sequence, 880 residues long: Tyrosine-protein kinase receptor TYRO3 (880 aa).

The first 30 residues, 1-30 (MALRRSMGWPGLRPLLLAGLASLLLPGSAA), serve as a signal peptide directing secretion. Ig-like C2-type domains lie at 31–118 (AGLK…TKIS) and 129–209 (PFFT…PAIV). The Extracellular segment spans residues 31 to 419 (AGLKLMGAPV…QGPPHSRTSW (389 aa)). Asn53, Asn75, Asn181, Asn220, Asn230, Asn283, Asn356, and Asn370 each carry an N-linked (GlcNAc...) asparagine glycan. Disulfide bonds link Cys54–Cys107 and Cys150–Cys193. Fibronectin type-III domains are found at residues 217-310 (APFN…TKGL) and 315-406 (APQN…SHDH). The helical transmembrane segment at 420-440 (VPVVLGVLTALITAAALALIL) threads the bilayer. Over 441–880 (LRKRRKETRF…QQGLLPHSSC (440 aa)) the chain is Cytoplasmic. The residue at position 456 (Ser456) is a Phosphoserine. Residues 508–785 (FTLGRMLGKG…LENILGHLSV (278 aa)) form the Protein kinase domain. ATP is bound by residues 514-522 (LGKGEFGSV) and Lys540. Asp645 functions as the Proton acceptor in the catalytic mechanism. Phosphotyrosine; by autocatalysis occurs at positions 671, 675, 676, and 794. A disordered region spans residues 800 to 864 (AEQPTESGSP…QQPESPLNEN (65 aa)). A phosphoserine mark is found at Ser808 and Ser859. Residues 849 to 864 (SPGQLEQQPESPLNEN) are compositionally biased toward polar residues.

It belongs to the protein kinase superfamily. Tyr protein kinase family. AXL/UFO subfamily. In terms of assembly, monomer and homodimer. Interacts (via N-terminus) with extracellular ligands TULP1 and GAS6. Interacts with PIK3R1; this interaction increases PI3-kinase activity. In terms of processing, autophosphorylated. Abundant in the brain and lower levels in other tissues.

The protein localises to the cell membrane. The catalysed reaction is L-tyrosyl-[protein] + ATP = O-phospho-L-tyrosyl-[protein] + ADP + H(+). Functionally, receptor tyrosine kinase that transduces signals from the extracellular matrix into the cytoplasm by binding to several ligands including TULP1 or GAS6. Regulates many physiological processes including cell survival, migration and differentiation. Ligand binding at the cell surface induces dimerization and autophosphorylation of TYRO3 on its intracellular domain that provides docking sites for downstream signaling molecules. Following activation by ligand, interacts with PIK3R1 and thereby enhances PI3-kinase activity. Activates the AKT survival pathway, including nuclear translocation of NF-kappa-B and up-regulation of transcription of NF-kappa-B-regulated genes. TYRO3 signaling plays a role in various processes such as neuron protection from excitotoxic injury, platelet aggregation and cytoskeleton reorganization. Also plays an important role in inhibition of Toll-like receptors (TLRs)-mediated innate immune response by activating STAT1, which selectively induces production of suppressors of cytokine signaling SOCS1 and SOCS3. This Mus musculus (Mouse) protein is Tyrosine-protein kinase receptor TYRO3 (Tyro3).